The following is a 278-amino-acid chain: Non-heme chloroperoxidase (278 aa).

The region spanning 26 to 264 is the AB hydrolase-1 domain; that stretch reads PVVLIHGFPL…GAPHGLLWTH (239 aa). Catalysis depends on residues serine 99, aspartate 229, and histidine 258.

It belongs to the AB hydrolase superfamily. Bacterial non-heme haloperoxidase / perhydrolase family. Homodimer.

This Kitasatospora aureofaciens (Streptomyces aureofaciens) protein is Non-heme chloroperoxidase (cpo).